Consider the following 74-residue polypeptide: Lambda-hexatoxin-Hv1e (74 aa).

The signal sequence occupies residues 1-22 (MNTATCFIVLLVVATVIGGIEA). Positions 23 to 35 (GEFDMRKDVMGLF) are excised as a propeptide. Intrachain disulfides connect Cys40–Cys54, Cys47–Cys59, Cys50–Cys51, and Cys53–Cys69.

It belongs to the neurotoxin 11 (kappa toxin) family. Expressed by the venom gland.

It is found in the secreted. Functionally, this excitatory toxin inhibits insect calcium-activated potassium (KCa) channels (Slo-type). The sequence is that of Lambda-hexatoxin-Hv1e from Hadronyche versuta (Blue mountains funnel-web spider).